The primary structure comprises 113 residues: MGVNKITHVAGTGPQPEAGQTVVIEYTGWLKDSSQADGKGAEFDSSIGRGDFVTQIGVGRLIRGWDEAVLKMKVGEKATLDISSDYGYGERGFHGHIPPNADLIFDVYLKGLQ.

Residues 19–113 (GQTVVIEYTG…IFDVYLKGLQ (95 aa)) form the PPIase FKBP-type domain.

This sequence belongs to the FKBP-type PPIase family. FKBP1 subfamily.

It is found in the cytoplasm. The enzyme catalyses [protein]-peptidylproline (omega=180) = [protein]-peptidylproline (omega=0). Its activity is regulated as follows. Inhibited by both FK506 and rapamycin. PPIases accelerate the folding of proteins. It catalyzes the cis-trans isomerization of proline imidic peptide bonds in oligopeptides. The polypeptide is FK506-binding protein 1B (fkr-3) (Neurospora crassa (strain ATCC 24698 / 74-OR23-1A / CBS 708.71 / DSM 1257 / FGSC 987)).